The following is a 457-amino-acid chain: Vasoactive intestinal polypeptide receptor 1 (457 aa).

Residues methionine 1 to alanine 30 form the signal peptide. The Extracellular portion of the chain corresponds to alanine 31 to serine 141. Disulfide bonds link cysteine 37–cysteine 208, cysteine 50–cysteine 72, cysteine 63–cysteine 105, cysteine 86–cysteine 122, and cysteine 215–cysteine 285. Residues asparagine 58, asparagine 69, and asparagine 100 are each glycosylated (N-linked (GlcNAc...) asparagine). Residues valine 142 to leucine 166 form a helical membrane-spanning segment. Residues phenylalanine 167 to arginine 174 are Cytoplasmic-facing. Residues asparagine 175 to aspartate 196 traverse the membrane as a helical segment. Residues leucine 197–lysine 216 lie on the Extracellular side of the membrane. Residues alanine 217–tyrosine 241 form a helical membrane-spanning segment. Residues threonine 242–tyrosine 254 are Cytoplasmic-facing. Residues phenylalanine 255–alanine 276 form a helical membrane-spanning segment. Residues arginine 277 to serine 291 lie on the Extracellular side of the membrane. N-linked (GlcNAc...) asparagine glycosylation is present at asparagine 290. A helical transmembrane segment spans residues serine 292–isoleucine 316. Topologically, residues arginine 317–arginine 338 are cytoplasmic. A helical transmembrane segment spans residues leucine 339–phenylalanine 359. The Extracellular portion of the chain corresponds to phenylalanine 360–glutamate 367. A helical membrane pass occupies residues valine 368–leucine 391. Over asparagine 392–valine 457 the chain is Cytoplasmic.

Belongs to the G-protein coupled receptor 2 family. As to quaternary structure, interacts with ADCYAP1/PACAP; activated by both PACAP27 and PACAP38 neuropeptides. Interacts with VIP; the interaction results in VIPR1 activation. In terms of tissue distribution, in lung, HT-29 colonic epithelial cells, Raji B-lymphoblasts. Lesser extent in brain, heart, kidney, liver and placenta. Not expressed in CD4+ or CD8+ T-cells. Expressed in the T-cell lines HARRIS, HuT 78, Jurkat and SUP-T1, but not in the T-cell lines Peer, MOLT-4, HSB and YT.

Its subcellular location is the cell membrane. Functionally, g protein-coupled receptor activated by the neuropeptides vasoactive intestinal peptide (VIP) and pituitary adenylate cyclase-activating polypeptide (ADCYAP1/PACAP). Binds VIP and both PACAP27 and PACAP38 bioactive peptides with the following order of ligand affinity VIP = PACAP27 &gt; PACAP38. Ligand binding causes a conformation change that triggers signaling via guanine nucleotide-binding proteins (G proteins) and modulates the activity of downstream effectors. Activates cAMP-dependent pathway. This Homo sapiens (Human) protein is Vasoactive intestinal polypeptide receptor 1.